The following is a 204-amino-acid chain: Glycerol-3-phosphate acyltransferase (204 aa).

Helical transmembrane passes span 8–28, 53–73, 81–101, 116–136, and 155–175; these read ILIF…CYIF, VPAA…VVIA, FITA…IFFG, FGFS…VAII, and VIFT…IIIL.

Belongs to the PlsY family. As to quaternary structure, probably interacts with PlsX.

The protein resides in the cell inner membrane. It catalyses the reaction an acyl phosphate + sn-glycerol 3-phosphate = a 1-acyl-sn-glycero-3-phosphate + phosphate. Its pathway is lipid metabolism; phospholipid metabolism. Its function is as follows. Catalyzes the transfer of an acyl group from acyl-phosphate (acyl-PO(4)) to glycerol-3-phosphate (G3P) to form lysophosphatidic acid (LPA). This enzyme utilizes acyl-phosphate as fatty acyl donor, but not acyl-CoA or acyl-ACP. This Francisella tularensis subsp. novicida (strain U112) protein is Glycerol-3-phosphate acyltransferase.